A 371-amino-acid chain; its full sequence is Cytochrome b (371 aa).

A run of 4 helical transmembrane segments spans residues 32 to 52 (VGFS…CLAW), 76 to 98 (FVIR…VHIF), 113 to 133 (VWAV…IGYV), and 179 to 199 (LHVL…MHLF). The heme b site is built by H82 and H96. Heme b-binding residues include H183 and H197. An a ubiquinone-binding site is contributed by H202. 4 helical membrane-spanning segments follow: residues 227 to 247 (FYLR…YFIF), 296 to 316 (LMVI…LWFV), 329 to 349 (LILF…ILAY), and 350 to 370 (PIWM…VCRL).

It belongs to the cytochrome b family. In terms of assembly, the main subunits of complex b-c1 are: cytochrome b, cytochrome c1 and the Rieske protein. Requires heme b as cofactor.

Its subcellular location is the mitochondrion inner membrane. Functionally, component of the ubiquinol-cytochrome c reductase complex (complex III or cytochrome b-c1 complex) that is part of the mitochondrial respiratory chain. The b-c1 complex mediates electron transfer from ubiquinol to cytochrome c. Contributes to the generation of a proton gradient across the mitochondrial membrane that is then used for ATP synthesis. This chain is Cytochrome b (MT-CYB), found in Leishmania tarentolae (Sauroleishmania tarentolae).